The chain runs to 403 residues: S-adenosylmethionine synthase (403 aa).

An ATP-binding site is contributed by H15. Mg(2+) is bound at residue D17. Residue E43 coordinates K(+). The L-methionine site is built by E56 and Q99. The interval 99-109 is flexible loop; the sequence is QSPDINQGVDR. Residues 166 to 168, 232 to 233, D241, 247 to 248, A264, and K268 each bind ATP; these read DAK, KF, and RK. D241 lines the L-methionine pocket. An L-methionine-binding site is contributed by K272.

The protein belongs to the AdoMet synthase family. As to quaternary structure, homotetramer; dimer of dimers. It depends on Mg(2+) as a cofactor. Requires K(+) as cofactor.

Its subcellular location is the cytoplasm. The enzyme catalyses L-methionine + ATP + H2O = S-adenosyl-L-methionine + phosphate + diphosphate. The protein operates within amino-acid biosynthesis; S-adenosyl-L-methionine biosynthesis; S-adenosyl-L-methionine from L-methionine: step 1/1. In terms of biological role, catalyzes the formation of S-adenosylmethionine (AdoMet) from methionine and ATP. The overall synthetic reaction is composed of two sequential steps, AdoMet formation and the subsequent tripolyphosphate hydrolysis which occurs prior to release of AdoMet from the enzyme. The protein is S-adenosylmethionine synthase of Xanthomonas campestris pv. campestris (strain 8004).